A 282-amino-acid polypeptide reads, in one-letter code: Heterogeneous nuclear ribonucleoprotein C (282 aa).

The 72-residue stretch at S17–E88 folds into the RRM domain. 2 disordered regions span residues A131–G177 and Q208–S282. The Nuclear localization signal signature appears at P141–V147. Low complexity predominate over residues S161–S172. The stretch at G177–D217 forms a coiled coil. Basic and acidic residues-rich tracts occupy residues Q208–D217 and L224–E235. Acidic residues-rich tracts occupy residues E236 to L257 and K265 to S282.

The protein belongs to the RRM HNRPC family. RALY subfamily. In terms of assembly, tetramer.

Its subcellular location is the nucleus. Its function is as follows. Binds pre-mRNA and nucleates the assembly of 40S hnRNP particles. Interacts with poly-U tracts in the 3'-UTR or 5'-UTR of mRNA and modulates the stability and the level of translation of bound mRNA molecules. Single HNRNPC tetramers bind 230-240 nucleotides. Trimers of HNRNPC tetramers bind 700 nucleotides. May play a role in the early steps of spliceosome assembly and pre-mRNA splicing. N6-methyladenosine (m6A) has been shown to alter the local structure in mRNAs and long non-coding RNAs (lncRNAs) via a mechanism named 'm(6)A-switch', facilitating binding of HNRNPC, leading to regulation of mRNA splicing. This chain is Heterogeneous nuclear ribonucleoprotein C (hnrnpc), found in Xenopus laevis (African clawed frog).